Here is a 1953-residue protein sequence, read N- to C-terminus: Protein BNI1 (1953 aa).

Disordered regions lie at residues 1–152 (MLKN…ASSL), 230–258 (MRAN…ANSS), 263–282 (KSVL…SNSL), and 287–306 (TLSS…SGSL). Residues 31–40 (ANSNATNSNT) are compositionally biased toward low complexity. Polar residues-rich tracts occupy residues 41 to 100 (GSPT…SQYM) and 110 to 143 (VSSQ…RQHT). In terms of domain architecture, GBD/FH3 spans 174–696 (EMPSDPYEVE…NVSVASTSDE (523 aa)). Low complexity predominate over residues 232 to 246 (ANTTSSSTASRTSMA). The span at 263 to 278 (KSVLMTSASSPTSTVY) shows a compositional bias: polar residues. Ser-311 and Ser-325 each carry phosphoserine. Positions 312 to 337 (LNNIYRGGAENNTSASTLPGDRTNRP) are disordered. 3 coiled-coil regions span residues 712–807 (QTDE…TILN), 864–894 (NKRL…EFEK), and 928–981 (NKLN…YKGF). 3 disordered regions span residues 990-1014 (IMDS…SLDP), 1040-1094 (HEIQ…LDAL), and 1149-1330 (TQKV…MPAS). An FH1 domain is found at 1053 to 1337 (SSSSSDDESE…PASQIKSAVT (285 aa)). A phosphoserine mark is found at Ser-1085 and Ser-1170. Positions 1184 to 1211 (DKAEKDMRQHVENGKQGRVVNHEEDKTA) are enriched in basic and acidic residues. Residues 1217-1237 (SKLNNTDGAEDLSTQSSVLSS) are compositionally biased toward polar residues. Over residues 1238-1250 (QPPPPPPPPPPVP) the composition is skewed to pro residues. Residues 1257–1270 (SLEKEKKSEDDTVK) are compositionally biased toward basic and acidic residues. The segment covering 1278-1292 (PAPPPPPPPPPPPPM) has biased composition (pro residues). 2 positions are modified to phosphoserine: Ser-1338 and Ser-1344. The FH2 domain maps to 1348 to 1766 (FEKYPRPHKK…YIKHKKIVEE (419 aa)). The stretch at 1732–1811 (KFADFINEYK…DKLLEQLKNA (80 aa)) forms a coiled coil. Basic and acidic residues predominate over residues 1768-1779 (QKRAQEKEKQKE). Disordered stretches follow at residues 1768–1797 (QKRA…AEDR), 1809–1844 (KNAG…LLND), and 1872–1899 (PTPL…LEDQ). A DAD domain is found at 1792 to 1826 (DEAEDRRAVMDKLLEQLKNAGPAKSDPSSARKRAL). Over residues 1821–1830 (ARKRALVRKK) the composition is skewed to basic residues. Over residues 1880–1896 (VMNTSEDLPSPSKTSAL) the composition is skewed to polar residues. The residue at position 1918 (Thr-1918) is a Phosphothreonine.

It belongs to the formin homology family. BNI1 subfamily. As to quaternary structure, homodimer, and possibly also homotetramer. Interacts with PFY1 via the FH1 domain and with actin via the FH2 domain.

It is found in the cell membrane. The protein localises to the cell projection. Its subcellular location is the ruffle membrane. It localises to the cytoplasm. The protein resides in the cytoskeleton. Its function is as follows. Required for the assembly of F-actin structures, such as actin cables and stress fibers. Nucleates actin filaments. Binds to the barbed end of the actin filament and acts as a leaky capper, slowing both polymerization and depolymerization. Protects the growing actin fiber from tight capping proteins and so increases the time of elongation and the total amount of F-actin. May organize microtubules by mediating spindle positioning and movement in the budding process. Potential target of the RHO family members. The sequence is that of Protein BNI1 (BNI1) from Saccharomyces cerevisiae (strain ATCC 204508 / S288c) (Baker's yeast).